A 30-amino-acid chain; its full sequence is Dermaseptin-3.4TR (30 aa).

In terms of tissue distribution, expressed by the skin glands.

The protein resides in the secreted. Has antimicrobial activity. This chain is Dermaseptin-3.4TR, found in Phyllomedusa trinitatis (Trinidad leaf frog).